The following is a 142-amino-acid chain: Protein lin-32 (142 aa).

The segment covering 30–48 (PLQSPNFSLDSPNYPDSLS) has biased composition (polar residues). The segment at 30–66 (PLQSPNFSLDSPNYPDSLSNGGGKDDKKKCRRYKTPS) is disordered. Residues 72 to 124 (MRRSAANERERRRMNTLNVAYDELREVLPEIDSGKKLSKFETLQMAQKYIECL) form the bHLH domain.

As to quaternary structure, forms a heterodimer with hlh-2. Expressed in PVD motor neurons.

It localises to the nucleus. Probable transcription factor which binds the E box motif 5'-CA[TC][AG]TG-3'. Essential for the specification of the neuroblast cell fate in the development of peripheral sense organs. Its role in the generation of sensory neurons may be through positively regulating the expression of the zinc finger protein ztf-11 during postdeirid neurogenesis. Required for specification of cell fate, acting in concert with lin-32, in the development of the male-specific genital sensilla (simple sense organs) known as rays. Involved in regulating glial specification, perhaps by suppressing a glial fate in different lineages during early embryogenesis. The protein is Protein lin-32 of Caenorhabditis elegans.